The following is a 437-amino-acid chain: MHNHVFKTIARHGLIALFFFFSISAMAAEVAKMDRIVAIVDQGVITEKELEDRIQTVIAQLEKQGTQLPPRDVLQKQILERLINDRLQLQYAAQTGLRVDDAQLDKTIERIAEQNKLSTGEFRKALEAEGIPYRKFREDIRNEIILARLREREVDNRVNVTESEIDNFLTTQSSRNDIQDEFEVAHILIRAPEESTPEELQKLKAKAEAALKELQSGADFAQVSAGYSDAPNALEGGILGWKASSQLPSLFVDALQALQPGQLSPVLRSPNGYHILKLLNRRGGSSPLVVDQTHVRHILIKLSEVVSELEAEQKINSIKERLDHGADFAELARQYSEDASANNGGDLGWTNAGDTVPAFEKAMNALDINEISAPVRTPFGWHIIQVLERRKQDMTQESARLKARQEIRARKADDAFQDWLSELRDRAYVEYRLEDKY.

The N-terminal stretch at 1-27 is a signal peptide; sequence MHNHVFKTIARHGLIALFFFFSISAMA. 2 PpiC domains span residues 179–280 and 290–388; these read QDEF…KLLN and VDQT…QVLE.

Its subcellular location is the periplasm. It catalyses the reaction [protein]-peptidylproline (omega=180) = [protein]-peptidylproline (omega=0). Chaperone involved in the correct folding and assembly of outer membrane proteins. Recognizes specific patterns of aromatic residues and the orientation of their side chains, which are found more frequently in integral outer membrane proteins. May act in both early periplasmic and late outer membrane-associated steps of protein maturation. The sequence is that of Chaperone SurA from Methylobacillus flagellatus (strain ATCC 51484 / DSM 6875 / VKM B-1610 / KT).